Reading from the N-terminus, the 169-residue chain is Phosphopantetheine adenylyltransferase (169 aa).

A substrate-binding site is contributed by Ser-10. ATP is bound by residues 10 to 11 (SF) and His-18. Positions 42, 74, and 88 each coordinate substrate. ATP-binding positions include 89 to 91 (GLR), Glu-99, and 124 to 130 (YAFLSSS).

The protein belongs to the bacterial CoaD family. As to quaternary structure, homohexamer. Mg(2+) is required as a cofactor.

It localises to the cytoplasm. The catalysed reaction is (R)-4'-phosphopantetheine + ATP + H(+) = 3'-dephospho-CoA + diphosphate. It functions in the pathway cofactor biosynthesis; coenzyme A biosynthesis; CoA from (R)-pantothenate: step 4/5. Its function is as follows. Reversibly transfers an adenylyl group from ATP to 4'-phosphopantetheine, yielding dephospho-CoA (dPCoA) and pyrophosphate. The chain is Phosphopantetheine adenylyltransferase from Geobacillus sp. (strain WCH70).